Consider the following 193-residue polypeptide: Transcriptional repressor NrdR (193 aa).

A zinc finger spans residues 3 to 34; it reads CPYCGGLDTQVKDSRPSEDASAIRRRRICPDC. An ATP-cone domain is found at 49–139; the sequence is LTVVKRSGRK…VYKNFREAKD (91 aa). The interval 150–193 is disordered; the sequence is DQQDGAVPQAEADRPIGAGPPSEAAQPAAGEGGDAPMRRARSRA.

The protein belongs to the NrdR family. Zn(2+) serves as cofactor.

Negatively regulates transcription of bacterial ribonucleotide reductase nrd genes and operons by binding to NrdR-boxes. The protein is Transcriptional repressor NrdR of Methylobacterium nodulans (strain LMG 21967 / CNCM I-2342 / ORS 2060).